The primary structure comprises 350 residues: Protein TRIGALACTOSYLDIACYLGLYCEROL 1, chloroplastic (350 aa).

Residues 67–86 form a disordered region; that stretch reads SMSMLEEETSTENNAPSQEA. The helical transmembrane segment at 98–117 threads the bilayer; the sequence is YIWRGLSVPIIAGQVVLRIL. At 118-136 the chain is on the stromal side; it reads KGKIHWRNTLQQLERTGPK. A helical membrane pass occupies residues 137-157; it reads SLGVCLLTSTFVGMAFTIQFV. The Chloroplast intermembrane segment spans residues 158-168; it reads REFTRLGLNRS. The helical transmembrane segment at 169-189 threads the bilayer; that stretch reads IGGVLALAFSRELSPVITSIV. The Stromal portion of the chain corresponds to 190-229; the sequence is VAGRMGSAFAAELGTMQVSEQTDTLRVLGADPIDYLITPR. A helical transmembrane segment spans residues 230-250; the sequence is VIASCLALPFLTLMCFTVGMA. The Chloroplast intermembrane segment spans residues 251–288; that stretch reads SSALLSDAVYGISINIIMDSAHRALRPWDIVSAMIKSQ. The chain crosses the membrane as a helical span at residues 289 to 309; it reads VFGAIISVISCSWGVTTTGGA. Residues 310-318 are Stromal-facing; the sequence is KGVGESTTS. The chain crosses the membrane as a helical span at residues 319–339; sequence AVVMSLVGIFIADFVLSSFFF. At 340 to 350 the chain is on the chloroplast intermembrane side; sequence QGAGDSLKNCV.

It belongs to the MlaE permease family. As to quaternary structure, permease subunit of the TGD complex, a lipid translocator at the inner chloroplast envelope membrane made of TGD1, TGD2 and TGD3. Interacts with TGD2 and TGD3 with an overall subunit stoichiometry of 2 TGD1, 2 TGD3 and 8 to 12 TGD2. Interacts with TGD5. High levels in green tissues, but low levels in nongreen tissues such as roots.

The protein resides in the plastid. Its subcellular location is the chloroplast inner membrane. Required during embryogenesis. Permease involved in lipid transfer from the endoplasmic reticulum (ER) to plastids, and necessary for thylakoids formation. The polypeptide is Protein TRIGALACTOSYLDIACYLGLYCEROL 1, chloroplastic (Arabidopsis thaliana (Mouse-ear cress)).